The primary structure comprises 476 residues: Neuropeptide receptor 18 (476 aa).

The Extracellular segment spans residues 1-61 (MSSFYNEAKF…LSNHDNSSLM (61 aa)). N-linked (GlcNAc...) asparagine glycans are attached at residues Asn43 and Asn57. The helical transmembrane segment at 62 to 82 (LIAGFYALLFMFGTCGNAAIL) threads the bilayer. Residues 83–102 (AVVHHVKGQDPRSRHNTTLT) lie on the Cytoplasmic side of the membrane. A helical transmembrane segment spans residues 103-123 (YICILSIVDFLSMLPIPMTII). Topologically, residues 124–139 (DQILGFWMFDTFACKL) are extracellular. Cys137 and Cys228 form a disulfide bridge. A helical membrane pass occupies residues 140 to 160 (FRLLEHIGKIFSTFILVAFSI). The Cytoplasmic segment spans residues 161–179 (DRYCAVCHPLQVRVRNQRT). Residues 180–200 (VFVFLGIMFFVTCVMLSPILL) traverse the membrane as a helical segment. Over 201–236 (YAHSKELVMHEKVDLDQEVITRMHLYKCVDDLGREL) the chain is Extracellular. Residues 237–257 (FVVFTLYSFVLAYLMPLLFMI) form a helical membrane-spanning segment. Over 258–291 (YFYYEMLIRLFKQANVIKQTLVGRRSGGEEKKLT) the chain is Cytoplasmic. Residues 292-312 (IPVGHIAIYTLAICSFHFICW) form a helical membrane-spanning segment. The Extracellular portion of the chain corresponds to 313 to 334 (TPYWISILYSLYEELYQDTKST). Residues 335-355 (ASPPTYAFIYFMYGVHALPYI) form a helical membrane-spanning segment. At 356 to 476 (NSASNFILYG…ITPDTESVIL (121 aa)) the chain is on the cytoplasmic side.

Belongs to the G-protein coupled receptor 1 family. In terms of tissue distribution, expressed in sensory neurons including ASER.

It is found in the cell membrane. Functionally, probable receptor for neuropeptide ligand nlp-9 that plays a role in octopamine signaling and specifically, the octapamine inhibition of aversion responses in olfactory sensory neurons. In AWB olfactory sensory neurons, required for the detection of preferred food sources. The sequence is that of Neuropeptide receptor 18 from Caenorhabditis elegans.